The following is a 661-amino-acid chain: DNA ligase (661 aa).

Residues 31 to 35 (DKEYD), 79 to 80 (SL), and Glu112 each bind NAD(+). The active-site N6-AMP-lysine intermediate is the Lys114. Residues Arg135, Glu169, Lys281, and Lys305 each coordinate NAD(+). Positions 398, 401, 414, and 420 each coordinate Zn(2+). The 84-residue stretch at 578 to 661 (QQENIFLGKT…ISEAEFEAML (84 aa)) folds into the BRCT domain.

It belongs to the NAD-dependent DNA ligase family. LigA subfamily. It depends on Mg(2+) as a cofactor. Requires Mn(2+) as cofactor.

The catalysed reaction is NAD(+) + (deoxyribonucleotide)n-3'-hydroxyl + 5'-phospho-(deoxyribonucleotide)m = (deoxyribonucleotide)n+m + AMP + beta-nicotinamide D-nucleotide.. In terms of biological role, DNA ligase that catalyzes the formation of phosphodiester linkages between 5'-phosphoryl and 3'-hydroxyl groups in double-stranded DNA using NAD as a coenzyme and as the energy source for the reaction. It is essential for DNA replication and repair of damaged DNA. This Alkaliphilus oremlandii (strain OhILAs) (Clostridium oremlandii (strain OhILAs)) protein is DNA ligase.